A 225-amino-acid chain; its full sequence is Cytidylate kinase (225 aa).

12 to 20 (GPSGAGKGT) is an ATP binding site.

Belongs to the cytidylate kinase family. Type 1 subfamily.

The protein localises to the cytoplasm. The catalysed reaction is CMP + ATP = CDP + ADP. The enzyme catalyses dCMP + ATP = dCDP + ADP. The protein is Cytidylate kinase of Stenotrophomonas maltophilia (strain R551-3).